The sequence spans 56 residues: Large ribosomal subunit protein bL32 (56 aa).

The span at 1-16 shows a compositional bias: basic residues; that stretch reads MAVQKSKKSRARRGMR. The tract at residues 1 to 56 is disordered; it reads MAVQKSKKSRARRGMRRSHDAISGPSLTVDQTSGETHRRHHVTADGYYKGVQVISK. Residues 25–34 show a composition bias toward polar residues; it reads PSLTVDQTSG.

The protein belongs to the bacterial ribosomal protein bL32 family.

This Pseudoalteromonas translucida (strain TAC 125) protein is Large ribosomal subunit protein bL32.